The chain runs to 197 residues: Guanylate kinase (197 aa).

Residues 9–188 (GRLVVFSAPS…AVEAVILAIS (180 aa)) enclose the Guanylate kinase-like domain. Position 16–23 (16–23 (APSGTGKS)) interacts with ATP.

Belongs to the guanylate kinase family.

It localises to the cytoplasm. It carries out the reaction GMP + ATP = GDP + ADP. Functionally, essential for recycling GMP and indirectly, cGMP. This is Guanylate kinase from Chlorobium luteolum (strain DSM 273 / BCRC 81028 / 2530) (Pelodictyon luteolum).